The primary structure comprises 422 residues: MAKTIQAIRGMNDCLPTQSPLWQKLEGAVKNVISAYGYNEMRMPIVEMTHLFSRAIGEVTDVVEKEMYTFEDRNGDSLTLRPEGTAGCVRAGIENGLLYNQEQRVWYMGPMFRHERPQKGRYRQFHQCGVEVFGLNGPDVDAELIMMTARLWRELGIDKHVRLELNSIGSLEARANYRTALIAFLEQHIDVLDEDCKRRMHTNPLRVLDTKNPDVQAILGDAPRLSDYLDPESTQHFAGLCELLDAAGIEYTVNERLVRGLDYYNRTVFEWITESLGSQGTVCGGGRYDGLVEQLGGKATPAVGFAMGLERLVLMLETLELTDVRRSVDVYVVTAGEGTMMAGMKLAEQVREAIPGVRVMNHFGGGNFKKQFKRADKVGAVVALVLGENEVADNTVVLKDLAGGEQVTYSQQEIASKIAELI.

The protein belongs to the class-II aminoacyl-tRNA synthetase family. Homodimer.

The protein resides in the cytoplasm. The enzyme catalyses tRNA(His) + L-histidine + ATP = L-histidyl-tRNA(His) + AMP + diphosphate + H(+). The chain is Histidine--tRNA ligase from Vibrio vulnificus (strain CMCP6).